An 89-amino-acid polypeptide reads, in one-letter code: Small ribosomal subunit protein uS15 (89 aa).

Belongs to the universal ribosomal protein uS15 family. As to quaternary structure, part of the 30S ribosomal subunit. Forms a bridge to the 50S subunit in the 70S ribosome, contacting the 23S rRNA.

Its function is as follows. One of the primary rRNA binding proteins, it binds directly to 16S rRNA where it helps nucleate assembly of the platform of the 30S subunit by binding and bridging several RNA helices of the 16S rRNA. Forms an intersubunit bridge (bridge B4) with the 23S rRNA of the 50S subunit in the ribosome. This Methylobacterium sp. (strain 4-46) protein is Small ribosomal subunit protein uS15.